The primary structure comprises 106 residues: Molt-inhibiting hormone (106 aa).

Positions 1-29 (MVNQVAQCFTVRRVWLVVVVGLLVHQTTA) are cleaved as a signal peptide. 3 cysteine pairs are disulfide-bonded: Cys36-Cys73, Cys53-Cys69, and Cys56-Cys82. Ala104 is subject to Alanine amide. The propeptide occupies 105-106 (GR).

As to expression, sinus gland of the eyestalk.

It localises to the secreted. Functionally, inhibits Y-organs where molting hormone (ecdysteroid) is secreted. A molting cycle is initiated when MIH secretion diminishes or stops. This is Molt-inhibiting hormone from Faxonius limosus (Spinycheek crayfish).